The following is a 215-amino-acid chain: GTP-binding nuclear protein ran-1 (215 aa).

In terms of domain architecture, Small GTPase Ran-type spans 6–170; the sequence is GIPTFKLVLV…LWLARKLLGD (165 aa). Residue 17 to 24 coordinates GTP; it reads DGGTGKTT. Positions 36–44 are switch-I; that stretch reads KKYVATLGV. GTP is bound by residues glycine 67, 121 to 124, and 149 to 151; these read NKVD and SAK. The segment at 67–83 is switch-II; it reads GQEKFGGLRDGYYIQGQ.

Belongs to the small GTPase superfamily. Ran family. As to quaternary structure, found in a nuclear export complex with RanGTP, exportin and pre-miRNA.

It is found in the nucleus. The protein localises to the chromosome. Its subcellular location is the centromere. It localises to the kinetochore. Ran GTPase system comprises ran-1, ran-2 and ran-3 and is essential in nucleocytoplasmic transport. Ran-1 is a GTP-binding protein that mediates the interaction between mitotic chromosomes and kinetochore microtubules. Plays a crucial role in nuclear envelope assembly at the end of each cell division. Required for the import of protein into the nucleus and also for RNA export. RCC1 (ran-3)/Ran (ran-1) complex (together with other proteins) acts as a component of a signal transmission pathway that detects unreplicated DNA. The sequence is that of GTP-binding nuclear protein ran-1 (ran-1) from Caenorhabditis elegans.